The primary structure comprises 143 residues: FAD synthase (143 aa).

ATP-binding positions include 11–12 (TF), 16–19 (HPGH), and Asp-94.

It belongs to the archaeal FAD synthase family. Homodimer. The cofactor is a divalent metal cation.

It catalyses the reaction FMN + ATP + H(+) = FAD + diphosphate. Its pathway is cofactor biosynthesis; FAD biosynthesis; FAD from FMN: step 1/1. Its function is as follows. Catalyzes the transfer of the AMP portion of ATP to flavin mononucleotide (FMN) to produce flavin adenine dinucleotide (FAD) coenzyme. The polypeptide is FAD synthase (Halomicrobium mukohataei (strain ATCC 700874 / DSM 12286 / JCM 9738 / NCIMB 13541) (Haloarcula mukohataei)).